We begin with the raw amino-acid sequence, 449 residues long: UDP-N-acetylmuramate--L-alanine ligase (449 aa).

121–127 (GAHGKSS) provides a ligand contact to ATP.

The protein belongs to the MurCDEF family.

It is found in the cytoplasm. It carries out the reaction UDP-N-acetyl-alpha-D-muramate + L-alanine + ATP = UDP-N-acetyl-alpha-D-muramoyl-L-alanine + ADP + phosphate + H(+). It participates in cell wall biogenesis; peptidoglycan biosynthesis. Functionally, cell wall formation. The polypeptide is UDP-N-acetylmuramate--L-alanine ligase (Helicobacter pylori (strain HPAG1)).